Here is a 415-residue protein sequence, read N- to C-terminus: Calreticulin (415 aa).

Residues 1–20 (MANPKSLSLFLLSLLAIASA) form the signal peptide. The N-linked (GlcNAc...) asparagine glycan is linked to Asn52. An intrachain disulfide couples Cys106 to Cys138. An alpha-D-glucoside-binding residues include Tyr110, Lys112, Tyr129, and Asp136. Asn152 carries N-linked (GlcNAc...) asparagine glycosylation. Tandem repeats lie at residues 192–203 (KQTGSLYTDWDL), 211–222 (DPEAKKPEDWDE), 228–239 (DPEDKKPEGYDD), 246–257 (DPDAKKPEDWDD), 261–271 (GEWTAPTIANP), 275–285 (GPWKPKKIKNP), and 289–299 (GKWKAPMIDNP). The tract at residues 192–257 (KQTGSLYTDW…DAKKPEDWDD (66 aa)) is 4 X approximate repeats. A compositionally biased stretch (basic and acidic residues) spans 208 to 253 (KIKDPEAKKPEDWDEKEYIPDPEDKKPEGYDDIPKEIPDPDAKKPE). The interval 208–276 (KIKDPEAKKP…TIANPEYKGP (69 aa)) is disordered. The segment at 261-299 (GEWTAPTIANPEYKGPWKPKKIKNPNYKGKWKAPMIDNP) is 3 X approximate repeats. An alpha-D-glucoside is bound at residue Glu319. The segment covering 347–376 (ETWGKNKDAEKAAFEEAEKKKEEEESKDDP) has biased composition (basic and acidic residues). Residues 347-415 (ETWGKNKDAE…DSAEDVHDEL (69 aa)) are disordered. Acidic residues-rich tracts occupy residues 377-397 (ADSD…EDDG) and 404-415 (AEDSAEDVHDEL). The short motif at 412–415 (HDEL) is the Prevents secretion from ER element.

The protein belongs to the calreticulin family.

The protein localises to the endoplasmic reticulum lumen. Molecular calcium-binding chaperone promoting folding, oligomeric assembly and quality control in the ER via the calreticulin/calnexin cycle. This lectin may interact transiently with almost all of the monoglucosylated glycoproteins that are synthesized in the ER. The chain is Calreticulin from Ricinus communis (Castor bean).